We begin with the raw amino-acid sequence, 134 residues long: Profilin-4 (134 aa).

A disulfide bridge links Cys-13 with Cys-118. The Involved in PIP2 interaction signature appears at 84-100 (AVIRGKKGSGGITIKKT). A Phosphothreonine modification is found at Thr-114.

This sequence belongs to the profilin family. As to quaternary structure, occurs in many kinds of cells as a complex with monomeric actin in a 1:1 ratio. Phosphorylated by MAP kinases.

It is found in the cytoplasm. It localises to the cytoskeleton. Its function is as follows. Binds to actin and affects the structure of the cytoskeleton. At high concentrations, profilin prevents the polymerization of actin, whereas it enhances it at low concentrations. The sequence is that of Profilin-4 from Olea europaea (Common olive).